The primary structure comprises 119 residues: Large ribosomal subunit protein bL20 (119 aa).

It belongs to the bacterial ribosomal protein bL20 family.

Its function is as follows. Binds directly to 23S ribosomal RNA and is necessary for the in vitro assembly process of the 50S ribosomal subunit. It is not involved in the protein synthesizing functions of that subunit. This chain is Large ribosomal subunit protein bL20, found in Shewanella woodyi (strain ATCC 51908 / MS32).